The chain runs to 174 residues: 2-oxo-4-hydroxy-4-carboxy-5-ureidoimidazoline decarboxylase (174 aa).

Catalysis depends on H67, which acts as the Proton donor. Residues P68, 84 to 88, and 119 to 123 each bind substrate; these read SQEEQ and FVICA. A Microbody targeting signal motif is present at residues 172-174; it reads TKL.

Belongs to the OHCU decarboxylase family. Homodimer.

It localises to the peroxisome. It carries out the reaction 5-hydroxy-2-oxo-4-ureido-2,5-dihydro-1H-imidazole-5-carboxylate + H(+) = (S)-allantoin + CO2. It participates in purine metabolism; urate degradation; (S)-allantoin from urate: step 3/3. In terms of biological role, catalyzes the stereoselective decarboxylation of 2-oxo-4-hydroxy-4-carboxy-5-ureidoimidazoline (OHCU) to (S)-allantoin. This Danio rerio (Zebrafish) protein is 2-oxo-4-hydroxy-4-carboxy-5-ureidoimidazoline decarboxylase (urad).